A 247-amino-acid polypeptide reads, in one-letter code: Proteasome subunit alpha type-7-1 (247 aa).

The protein belongs to the peptidase T1A family. In terms of assembly, the 26S proteasome consists of a 20S proteasome core and two 19S regulatory subunits. The 20S proteasome core is composed of 28 subunits that are arranged in four stacked rings, resulting in a barrel-shaped structure. The two end rings are each formed by seven alpha subunits, and the two central rings are each formed by seven beta subunits. The catalytic chamber with the active sites is on the inside of the barrel.

It is found in the cytoplasm. Its subcellular location is the nucleus. In terms of biological role, the proteasome is a multicatalytic proteinase complex which is characterized by its ability to cleave peptides with Arg, Phe, Tyr, Leu, and Glu adjacent to the leaving group at neutral or slightly basic pH. The proteasome has an ATP-dependent proteolytic activity. The sequence is that of Proteasome subunit alpha type-7-1 (Pros28.1) from Drosophila virilis (Fruit fly).